We begin with the raw amino-acid sequence, 360 residues long: Snurportin-1 (360 aa).

At methionine 1 the chain carries N-acetylmethionine. A disordered region spans residues 1–42 (MEELSQALASSFSVSQDLNSTAAPHPRLSQYKSKYSSLEQSE). The tract at residues 1–65 (MEELSQALAS…LDYVNHARRL (65 aa)) is necessary for interaction with KPNB1 and m3G-cap U1 and U5 snRNP import receptor activity. The segment at 1–159 (MEELSQALAS…NRFSSLLPGG (159 aa)) is necessary for interaction with XPO1. The span at 7–22 (ALASSFSVSQDLNSTA) shows a compositional bias: polar residues. An IBB domain is found at 11 to 73 (SFSVSQDLNS…RLAEDDWTGM (63 aa)). Phosphoserine is present on serine 75. The interval 127 to 129 (GKR) is interaction with m3G-cap structure. The tract at residues 208 to 328 (MHSKLPEEEG…GMKEKLTHKA (121 aa)) is necessary for binding to the m3G-cap structure. The tract at residues 339–360 (LSTPKLKGSSHSPDHPGCLMEN) is disordered. Serine 350 carries the post-translational modification Phosphoserine.

Belongs to the snurportin family. As to quaternary structure, component of an import snRNP complex composed of KPNB1, SNUPN, SMN1 and ZNF259. Component of a nuclear export receptor complex composed of KPNB1, Ran, SNUPN and XPO1. Found in a trimeric export complex with SNUPN, Ran and XPO1. Interacts (via IBB domain) with KPNB1; the interaction is direct. Interacts with DDX20, IPO7, SMN1, SNRPB and XPO1. Interacts directly with XPO1. Its interaction with XPO1 and binding to m3G-cap U snRNPs appears to be mutually exclusive. Can form homomers.

It localises to the nucleus. The protein localises to the cytoplasm. In terms of biological role, functions as an U snRNP-specific nuclear import adapter. Involved in the trimethylguanosine (m3G)-cap-dependent nuclear import of U snRNPs. Binds specifically to the terminal m3G-cap U snRNAs. The polypeptide is Snurportin-1 (SNUPN) (Homo sapiens (Human)).